The primary structure comprises 247 residues: Transcription factor otaR1 (247 aa).

Disordered stretches follow at residues 1–48 and 100–143; these read MEPA…ETSM and DNAS…PLGN. Over residues 23-47 the composition is skewed to low complexity; the sequence is DESSSTGLSLGSLLSSSNDLSSETS. The span at 134–143 shows a compositional bias: polar residues; sequence ANPTSVPLGN. A basic motif region spans residues 156–196; the sequence is KKYHEKYKERNRVAAGKSRQKQVDLIELLQAEQREEERRRK. Residues 156-219 enclose the bZIP domain; sequence KKYHEKYKER…LDLKQELQHH (64 aa). The interval 198-212 is leucine-zipper; sequence LERELSQIHKELLDL.

It localises to the nucleus. Functionally, transcription factor; part of the gene cluster that mediates the biosynthesis of ochratoxin A (OTA), a mycotoxin demonstrated to have nephrotoxic, immunotoxic, genotoxic, neurotoxic, and teratogenic properties. Positively regulates the expression of the cluster genes otaA, otaB, otaC and otaD, and the subsequent production of OTA. The chain is Transcription factor otaR1 from Aspergillus carbonarius (strain ITEM 5010).